Reading from the N-terminus, the 402-residue chain is Plasminogen activator inhibitor 1 (402 aa).

The signal sequence occupies residues 1-22 (MQMSSALACLILGLVLVSGKGF). N-linked (GlcNAc...) asparagine glycosylation is found at N232, N288, and N352.

This sequence belongs to the serpin family. Forms a heterodimer with TMPRSS7. Interacts with VTN. Binds LRP1B; binding is followed by internalization and degradation. Interacts with PPP1CB. In complex with PLAU/uPA, interacts with PLAUR/uPAR. Interacts with SORL1 and LRP1, either alone or in complex with PLAU; these interactions are abolished in the presence of LRPAP1/RAP. The ternary complex composed of PLAUR-PLAU-PAI1 also interacts with SORL1. Interacts with PLAT/tPA. Also interacts with SORL1, when complexed to PLAT/tPA.

Its subcellular location is the secreted. Its function is as follows. Serine protease inhibitor. Inhibits TMPRSS7. Is a primary inhibitor of tissue-type plasminogen activator (PLAT) and urokinase-type plasminogen activator (PLAU). As PLAT inhibitor, it is required for fibrinolysis down-regulation and is responsible for the controlled degradation of blood clots. As PLAU inhibitor, it is involved in the regulation of cell adhesion and spreading. Acts as a regulator of cell migration, independently of its role as protease inhibitor. It is required for stimulation of keratinocyte migration during cutaneous injury repair. Involved in cellular and replicative senescence. Plays a role in alveolar type 2 cells senescence in the lung. Is involved in the regulation of cementogenic differentiation of periodontal ligament stem cells, and regulates odontoblast differentiation and dentin formation during odontogenesis. This Mus musculus (Mouse) protein is Plasminogen activator inhibitor 1 (Serpine1).